The following is a 478-amino-acid chain: METARGRVLSVASECVPLLKTGGLADVVGALPGALAAEGWEMRVLMPCYRPLKWRLEEMEEVFAEEDLFGGPGRVMAGEVAGRKMLLLDAPHLYDREGGPYAGPDGDWGDNAQRFAALSWIGARIAREGLGDGWRPDVVHAHDWQAGFTPAYMNYWGSGGASSVLTVHNIAFQGWAPASLLSALRLPPQEFHPAALEYYGGLSSLKAGLVSADHITTVSPTYACELMRPEFGMGLQGVIAQRAGQVTGILNGVDTDIWSPEVEERPYDAESLKAKAENRAVLSGAFKLSVPGPLAILVSRLTYQKGIDLIPEVLPDFIAAGGGLAVLGTGDAPLEAAMRELEVRFPGRVGVRIGYDEGLSHLMFAGGDAVLVPSRFEPCGLTQMYGLRYGAIPVVALTGGLADTIINANPAAMAAGCATGLTFHPTEPPAFAEALRRLIHLYADPAAWETVQRNAMRHPVGWETSAAAYAALYRELVA.

Lysine 20 contributes to the ADP-alpha-D-glucose binding site.

This sequence belongs to the glycosyltransferase 1 family. Bacterial/plant glycogen synthase subfamily.

It carries out the reaction [(1-&gt;4)-alpha-D-glucosyl](n) + ADP-alpha-D-glucose = [(1-&gt;4)-alpha-D-glucosyl](n+1) + ADP + H(+). It functions in the pathway glycan biosynthesis; glycogen biosynthesis. In terms of biological role, synthesizes alpha-1,4-glucan chains using ADP-glucose. The protein is Glycogen synthase of Cereibacter sphaeroides (strain ATCC 17023 / DSM 158 / JCM 6121 / CCUG 31486 / LMG 2827 / NBRC 12203 / NCIMB 8253 / ATH 2.4.1.) (Rhodobacter sphaeroides).